The sequence spans 185 residues: Adenine phosphoribosyltransferase (185 aa).

The protein belongs to the purine/pyrimidine phosphoribosyltransferase family. Homodimer.

It is found in the cytoplasm. The catalysed reaction is AMP + diphosphate = 5-phospho-alpha-D-ribose 1-diphosphate + adenine. It functions in the pathway purine metabolism; AMP biosynthesis via salvage pathway; AMP from adenine: step 1/1. Catalyzes a salvage reaction resulting in the formation of AMP, that is energically less costly than de novo synthesis. This is Adenine phosphoribosyltransferase from Kineococcus radiotolerans (strain ATCC BAA-149 / DSM 14245 / SRS30216).